The primary structure comprises 215 residues: UPF0502 protein Gbem_0102 (215 aa).

This sequence belongs to the UPF0502 family.

The chain is UPF0502 protein Gbem_0102 from Citrifermentans bemidjiense (strain ATCC BAA-1014 / DSM 16622 / JCM 12645 / Bem) (Geobacter bemidjiensis).